The following is a 180-amino-acid chain: Acireductone dioxygenase (180 aa).

4 residues coordinate Fe(2+): H99, H101, E105, and H145. H99, H101, E105, and H145 together coordinate Ni(2+).

Belongs to the acireductone dioxygenase (ARD) family. Monomer. Fe(2+) is required as a cofactor. It depends on Ni(2+) as a cofactor.

The catalysed reaction is 1,2-dihydroxy-5-(methylsulfanyl)pent-1-en-3-one + O2 = 3-(methylsulfanyl)propanoate + CO + formate + 2 H(+). The enzyme catalyses 1,2-dihydroxy-5-(methylsulfanyl)pent-1-en-3-one + O2 = 4-methylsulfanyl-2-oxobutanoate + formate + 2 H(+). Its pathway is amino-acid biosynthesis; L-methionine biosynthesis via salvage pathway; L-methionine from S-methyl-5-thio-alpha-D-ribose 1-phosphate: step 5/6. Its function is as follows. Catalyzes 2 different reactions between oxygen and the acireductone 1,2-dihydroxy-3-keto-5-methylthiopentene (DHK-MTPene) depending upon the metal bound in the active site. Fe-containing acireductone dioxygenase (Fe-ARD) produces formate and 2-keto-4-methylthiobutyrate (KMTB), the alpha-ketoacid precursor of methionine in the methionine recycle pathway. Ni-containing acireductone dioxygenase (Ni-ARD) produces methylthiopropionate, carbon monoxide and formate, and does not lie on the methionine recycle pathway. The protein is Acireductone dioxygenase of Geobacillus thermodenitrificans (strain NG80-2).